We begin with the raw amino-acid sequence, 117 residues long: UPF0344 protein GWCH70_0687 (117 aa).

4 helical membrane passes run 2–22 (THAH…AVSL), 32–52 (IVQM…GLLL), 55–75 (IASI…LIGA), and 97–117 (IVAF…FDLF).

Belongs to the UPF0344 family.

The protein resides in the cell membrane. The sequence is that of UPF0344 protein GWCH70_0687 from Geobacillus sp. (strain WCH70).